Here is a 1403-residue protein sequence, read N- to C-terminus: Baculoviral IAP repeat-containing protein 1 (1403 aa).

BIR repeat units lie at residues 60–127 (EAKR…CGFL), 159–227 (EEAR…CEFL), and 278–345 (EELR…CPFL). Zn(2+) contacts are provided by Cys315, Cys318, His335, and Cys342. The NACHT domain maps to 464-758 (SVMCVEGEAG…EFLAGMRLIE (295 aa)). 473–478 (GSGKTV) serves as a coordination point for ATP.

Interacts (via NACHT domain) with APAF1 (via CARD and NACHT domains). Interacts with C.violaceum needle protein CprI. As to expression, expressed in motor neurons, but not in sensory neurons. Found in liver and placenta, and to a lesser extent in spinal cord.

Anti-apoptotic protein which acts by inhibiting the activities of CASP3, CASP7 and CASP9. Can inhibit the autocleavage of pro-CASP9 and cleavage of pro-CASP3 by CASP9. Capable of inhibiting CASP9 autoproteolysis at 'Asp-315' and decreasing the rate of auto proteolysis at 'Asp-330'. Acts as a mediator of neuronal survival in pathological conditions. Prevents motor-neuron apoptosis induced by a variety of signals. Possible role in the prevention of spinal muscular atrophy that seems to be caused by inappropriate persistence of motor-neuron apoptosis: mutated or deleted forms of NAIP have been found in individuals with severe spinal muscular atrophy. Its function is as follows. Acts as a sensor component of the NLRC4 inflammasome that specifically recognizes and binds needle protein CprI from pathogenic bacteria C.violaceum. Association of pathogenic bacteria proteins drives in turn drive assembly and activation of the NLRC4 inflammasome, promoting caspase-1 activation, cytokine production and macrophage pyroptosis. The NLRC4 inflammasome is activated as part of the innate immune response to a range of intracellular bacteria such as C.violaceum and L.pneumophila. This chain is Baculoviral IAP repeat-containing protein 1 (NAIP), found in Homo sapiens (Human).